Here is a 124-residue protein sequence, read N- to C-terminus: Magnetosome protein MamC (124 aa).

Over 2 to 8 the chain is Cytoplasmic; it reads PFHLAPY. The helical transmembrane segment at 9-29 threads the bilayer; that stretch reads LAKSVPGVGVLGALVGGAAAL. Residues 30 to 64 are Lumenal-facing; it reads AKNVRLLKEKRITNTEAAIDTGKETVGAGLATALS. Positions 36-56 are MIC, when fused with the C-terminus of maltose-binding protein (MBP) or expressed as a fragment, improves quality of iron particles during precipitation experiments, binds magnetite; the sequence is LKEKRITNTEAAIDTGKETVG. A helical transmembrane segment spans residues 65–85; that stretch reads AVAATAVGGGLVVSLGTALVA. The Cytoplasmic segment spans residues 86–124; that stretch reads GVAAKYAWDRGVDLVEKELNRGKAANGASDEDILRDELA.

The protein belongs to the magnetosome MamC family. In terms of assembly, probably interacts with MamA.

The protein resides in the magnetosome membrane. Its function is as follows. Probably involved in magnetite crystal growth. The lumenal domain may bind the magnetite crystals, affecting crystal size and shape. The chain is Magnetosome protein MamC from Paramagnetospirillum magneticum (strain ATCC 700264 / AMB-1) (Magnetospirillum magneticum).